Consider the following 189-residue polypeptide: Elongation factor P (189 aa).

The protein belongs to the elongation factor P family.

Its subcellular location is the cytoplasm. It participates in protein biosynthesis; polypeptide chain elongation. Involved in peptide bond synthesis. Stimulates efficient translation and peptide-bond synthesis on native or reconstituted 70S ribosomes in vitro. Probably functions indirectly by altering the affinity of the ribosome for aminoacyl-tRNA, thus increasing their reactivity as acceptors for peptidyl transferase. The polypeptide is Elongation factor P (Rhizobium radiobacter (Agrobacterium tumefaciens)).